The primary structure comprises 222 residues: Large ribosomal subunit protein uL4 (222 aa).

The protein belongs to the universal ribosomal protein uL4 family. As to quaternary structure, part of the 50S ribosomal subunit.

Its function is as follows. One of the primary rRNA binding proteins, this protein initially binds near the 5'-end of the 23S rRNA. It is important during the early stages of 50S assembly. It makes multiple contacts with different domains of the 23S rRNA in the assembled 50S subunit and ribosome. Forms part of the polypeptide exit tunnel. The sequence is that of Large ribosomal subunit protein uL4 from Methylacidiphilum infernorum (isolate V4) (Methylokorus infernorum (strain V4)).